We begin with the raw amino-acid sequence, 252 residues long: Phosphoglycolate phosphatase (252 aa).

Catalysis depends on Asp13, which acts as the Nucleophile. Asp13, Asp15, and Asp192 together coordinate Mg(2+).

Belongs to the HAD-like hydrolase superfamily. CbbY/CbbZ/Gph/YieH family. In terms of assembly, monomer. Mg(2+) is required as a cofactor. Chloride serves as cofactor.

It catalyses the reaction 2-phosphoglycolate + H2O = glycolate + phosphate. The protein operates within organic acid metabolism; glycolate biosynthesis; glycolate from 2-phosphoglycolate: step 1/1. Functionally, specifically catalyzes the dephosphorylation of 2-phosphoglycolate. Is involved in the dissimilation of the intracellular 2-phosphoglycolate formed during the DNA repair of 3'-phosphoglycolate ends, a major class of DNA lesions induced by oxidative stress. This Escherichia coli O157:H7 protein is Phosphoglycolate phosphatase.